The following is a 343-amino-acid chain: S-adenosylmethionine:tRNA ribosyltransferase-isomerase (343 aa).

This sequence belongs to the QueA family. In terms of assembly, monomer.

It is found in the cytoplasm. The enzyme catalyses 7-aminomethyl-7-carbaguanosine(34) in tRNA + S-adenosyl-L-methionine = epoxyqueuosine(34) in tRNA + adenine + L-methionine + 2 H(+). It participates in tRNA modification; tRNA-queuosine biosynthesis. Transfers and isomerizes the ribose moiety from AdoMet to the 7-aminomethyl group of 7-deazaguanine (preQ1-tRNA) to give epoxyqueuosine (oQ-tRNA). The protein is S-adenosylmethionine:tRNA ribosyltransferase-isomerase of Dehalococcoides mccartyi (strain ATCC BAA-2100 / JCM 16839 / KCTC 5957 / BAV1).